Here is a 309-residue protein sequence, read N- to C-terminus: Serine/threonine-protein phosphatase 4 catalytic subunit (309 aa).

Mn(2+) contacts are provided by aspartate 52, histidine 54, aspartate 80, and asparagine 112. The active-site Proton donor is the histidine 113. Residues histidine 162 and histidine 236 each coordinate Mn(2+). Residue leucine 309 is modified to Leucine methyl ester.

It belongs to the PPP phosphatase family. PP-4 (PP-X) subfamily. In terms of assembly, catalytic subunit of the histone H2A phosphatase complex (HTP-C) containing PPH3, PSY2 and PSY4. The cofactor is Mn(2+).

It localises to the cytoplasm. Its subcellular location is the nucleus. The enzyme catalyses O-phospho-L-seryl-[protein] + H2O = L-seryl-[protein] + phosphate. The catalysed reaction is O-phospho-L-threonyl-[protein] + H2O = L-threonyl-[protein] + phosphate. Forms the histone H2A phosphatase complex in association with the regulatory subunits PSY2 and PSY4, which dephosphorylates H2AS128ph (gamma-H2A) that has been displaced from sites of DNA lesions in the double-stranded DNA break repair process. Dephosphorylation is necessary for efficient recovery from the DNA damage checkpoint. This Candida glabrata (strain ATCC 2001 / BCRC 20586 / JCM 3761 / NBRC 0622 / NRRL Y-65 / CBS 138) (Yeast) protein is Serine/threonine-protein phosphatase 4 catalytic subunit (PPH3).